A 312-amino-acid chain; its full sequence is Translation initiation factor IF3-2, chloroplastic (312 aa).

The transit peptide at 1–55 directs the protein to the chloroplast; sequence MAGITSSTVGFNAVFTGITKTVSSHSLFSVDSKLCSLRLSKTELSFTNLTPSPRR. The segment covering 253–263 has biased composition (basic and acidic residues); it reads EMIRKPQEPPT. Positions 253–312 are disordered; it reads EMIRKPQEPPTRKKKKTAENEASASAAEITAEPEPEPEPEPEPEPEPEPEPEPEPLQIDS. Low complexity predominate over residues 272–282; the sequence is NEASASAAEIT. The segment covering 283-305 has biased composition (acidic residues); that stretch reads AEPEPEPEPEPEPEPEPEPEPEP.

Belongs to the IF-3 family. Monomer. As to expression, highly expressed in young, newly emerged leaves.

The protein resides in the plastid. It is found in the chloroplast. In terms of biological role, chloroplast translation initiation factor that is essential for the coordination of leaf and chloroplast development. IF-3 binds to the 30S ribosomal subunit and shifts the equilibrium between 70S ribosomes and their 50S and 30S subunits in favor of the free subunits, thus enhancing the availability of 30S subunits on which protein synthesis initiation begins. The polypeptide is Translation initiation factor IF3-2, chloroplastic (Arabidopsis thaliana (Mouse-ear cress)).